The chain runs to 347 residues: NADH-ubiquinone oxidoreductase chain 2 (347 aa).

Helical transmembrane passes span 13-33 (VILG…WIGF), 59-79 (YFFT…LNLM), 96-116 (MIMT…FWVP), 122-142 (IPLS…LTVL), 149-169 (INLT…GWGG), 178-198 (IMAY…IYNP), 200-220 (MTLL…MLFM), 240-260 (IVTI…LTGF), 276-296 (IILP…YMRL), and 325-345 (LLTP…MIII).

It belongs to the complex I subunit 2 family. In terms of assembly, core subunit of respiratory chain NADH dehydrogenase (Complex I) which is composed of 45 different subunits. Interacts with TMEM242.

The protein resides in the mitochondrion inner membrane. It carries out the reaction a ubiquinone + NADH + 5 H(+)(in) = a ubiquinol + NAD(+) + 4 H(+)(out). Core subunit of the mitochondrial membrane respiratory chain NADH dehydrogenase (Complex I) which catalyzes electron transfer from NADH through the respiratory chain, using ubiquinone as an electron acceptor. Essential for the catalytic activity and assembly of complex I. The chain is NADH-ubiquinone oxidoreductase chain 2 from Molossus ater (Black mastiff bat).